The chain runs to 351 residues: Phospho-N-acetylmuramoyl-pentapeptide-transferase (351 aa).

A run of 10 helical transmembrane segments spans residues 17 to 37, 62 to 82, 85 to 105, 124 to 144, 161 to 181, 190 to 210, 230 to 250, 254 to 274, 279 to 299, and 328 to 348; these read MAYA…HIIL, GIPT…LVFW, ILNV…FLGF, FKIY…YYFG, IDLG…ASNS, GLAI…AYLT, LVIF…FNAY, IMMG…AALI, ILFS…IIQV, and QVVI…LSTI.

Belongs to the glycosyltransferase 4 family. MraY subfamily. Requires Mg(2+) as cofactor.

The protein localises to the cell inner membrane. It catalyses the reaction UDP-N-acetyl-alpha-D-muramoyl-L-alanyl-gamma-D-glutamyl-meso-2,6-diaminopimeloyl-D-alanyl-D-alanine + di-trans,octa-cis-undecaprenyl phosphate = di-trans,octa-cis-undecaprenyl diphospho-N-acetyl-alpha-D-muramoyl-L-alanyl-D-glutamyl-meso-2,6-diaminopimeloyl-D-alanyl-D-alanine + UMP. It participates in cell wall biogenesis; peptidoglycan biosynthesis. Catalyzes the initial step of the lipid cycle reactions in the biosynthesis of the cell wall peptidoglycan: transfers peptidoglycan precursor phospho-MurNAc-pentapeptide from UDP-MurNAc-pentapeptide onto the lipid carrier undecaprenyl phosphate, yielding undecaprenyl-pyrophosphoryl-MurNAc-pentapeptide, known as lipid I. In Borrelia garinii subsp. bavariensis (strain ATCC BAA-2496 / DSM 23469 / PBi) (Borreliella bavariensis), this protein is Phospho-N-acetylmuramoyl-pentapeptide-transferase.